The sequence spans 506 residues: GTPase Der (506 aa).

EngA-type G domains are found at residues 3–166 and 218–391; these read PVVA…GEQL and IKIA…ACAT. GTP-binding positions include 9–16, 56–60, 118–121, 224–231, 271–275, and 336–339; these read GRPNVGKS, DTGGI, NKTD, DTAGV, and NKWD. A KH-like domain is found at 392-476; it reads QKTSTSMLTR…PIRIQFQEGN (85 aa).

The protein belongs to the TRAFAC class TrmE-Era-EngA-EngB-Septin-like GTPase superfamily. EngA (Der) GTPase family. In terms of assembly, associates with the 50S ribosomal subunit.

GTPase that plays an essential role in the late steps of ribosome biogenesis. This is GTPase Der from Actinobacillus pleuropneumoniae serotype 5b (strain L20).